Reading from the N-terminus, the 299-residue chain is Pyridoxal 5'-phosphate synthase subunit PdxS (299 aa).

Residue Asp24 participates in D-ribose 5-phosphate binding. Lys81 serves as the catalytic Schiff-base intermediate with D-ribose 5-phosphate. Gly153 serves as a coordination point for D-ribose 5-phosphate. Arg165 provides a ligand contact to D-glyceraldehyde 3-phosphate. D-ribose 5-phosphate-binding positions include Gly219 and 240–241; that span reads GS.

The protein belongs to the PdxS/SNZ family. As to quaternary structure, in the presence of PdxT, forms a dodecamer of heterodimers.

It catalyses the reaction aldehydo-D-ribose 5-phosphate + D-glyceraldehyde 3-phosphate + L-glutamine = pyridoxal 5'-phosphate + L-glutamate + phosphate + 3 H2O + H(+). Its pathway is cofactor biosynthesis; pyridoxal 5'-phosphate biosynthesis. In terms of biological role, catalyzes the formation of pyridoxal 5'-phosphate from ribose 5-phosphate (RBP), glyceraldehyde 3-phosphate (G3P) and ammonia. The ammonia is provided by the PdxT subunit. Can also use ribulose 5-phosphate and dihydroxyacetone phosphate as substrates, resulting from enzyme-catalyzed isomerization of RBP and G3P, respectively. The polypeptide is Pyridoxal 5'-phosphate synthase subunit PdxS (Methanococcus maripaludis (strain DSM 14266 / JCM 13030 / NBRC 101832 / S2 / LL)).